A 417-amino-acid chain; its full sequence is MKVTDLKQLGQQAKEASYTLGLMDTRQKNTLLNKMAAAIEANAPRILQANALDLEQAATHGISETMQDRLRLTEERITAMAEGIRQVATLPDPIGEVDKMWRNEAGLLIGQQRVPLGVIGIIYESRPNVTTDAASLCFKSGNAVILRGGKEAFHSNQILVTILQEALIQEAVSPHLIQFVDDTSRETAQQLMRLNDYLDVLIPRGGANLIKTVLTTATVPVIETGTGNCHIYVDKDAQLTMATEIIVNAKCQRPSVCNAAETLLIHQEVAEAFLPTIEKALKEFHVELRADERALAIFEEAIPATEQDWETEFLDFILAVKVVDSLDEAIQHINRYNTKHSESIISDNYFATQQFLQQVDAAAVYANASTRFTDGFEFGFGAEIGISTQKLHARGPMGLAELTSTKYVIYGNGQARS.

The protein belongs to the gamma-glutamyl phosphate reductase family.

The protein resides in the cytoplasm. It carries out the reaction L-glutamate 5-semialdehyde + phosphate + NADP(+) = L-glutamyl 5-phosphate + NADPH + H(+). The protein operates within amino-acid biosynthesis; L-proline biosynthesis; L-glutamate 5-semialdehyde from L-glutamate: step 2/2. Functionally, catalyzes the NADPH-dependent reduction of L-glutamate 5-phosphate into L-glutamate 5-semialdehyde and phosphate. The product spontaneously undergoes cyclization to form 1-pyrroline-5-carboxylate. In Enterococcus faecalis (strain ATCC 700802 / V583), this protein is Gamma-glutamyl phosphate reductase.